The sequence spans 288 residues: Type II restriction enzyme DpnII (288 aa).

This sequence belongs to the DpnII type II restriction endonuclease family. As to quaternary structure, homodimer.

The catalysed reaction is Endonucleolytic cleavage of DNA to give specific double-stranded fragments with terminal 5'-phosphates.. A P subtype restriction enzyme that recognizes the double-stranded unmethylated sequence 5'-GATC-3' and cleaves before G-1. This is Type II restriction enzyme DpnII from Streptococcus pneumoniae.